The chain runs to 513 residues: Activin receptor type-2B (513 aa).

The first 18 residues, 1–18 (MTAPWAALALLWGSLCAG), serve as a signal peptide directing secretion. At 19 to 137 (SGRGEAETRE…PPPTAPTLLT (119 aa)) the chain is on the extracellular side. Cystine bridges form between Cys29/Cys59, Cys49/Cys77, Cys84/Cys103, Cys90/Cys102, and Cys104/Cys109. Residues Asn42 and Asn65 are each glycosylated (N-linked (GlcNAc...) asparagine). A helical membrane pass occupies residues 138-158 (VLAYSLLPIGGLSLIVLLAFW). The Cytoplasmic portion of the chain corresponds to 159–513 (MYRHRKPPYG…VDLLPKESSI (355 aa)). The 292-residue stretch at 190 to 481 (LQLLEIKARG…AGCVEERVSL (292 aa)) folds into the Protein kinase domain. Residues 196 to 204 (KARGRFGCV) and Lys217 each bind ATP. Asp322 serves as the catalytic Proton acceptor. Residues 492 to 513 (DCLVSLVTSVTNVDLLPKESSI) form an interaction with DYNLT1 region.

This sequence belongs to the protein kinase superfamily. TKL Ser/Thr protein kinase family. TGFB receptor subfamily. As to quaternary structure, forms an activin receptor complex with activin type II receptors such as ACVR1B. Interacts with VPS39. Interacts with DYNLT1. Interacts with BMP3. Interacts with BMP2. It depends on Mg(2+) as a cofactor. Mn(2+) serves as cofactor. Post-translationally, phosphorylated. Constitutive phosphorylation is in part catalyzed by its own kinase activity.

The protein resides in the cell membrane. The catalysed reaction is L-threonyl-[receptor-protein] + ATP = O-phospho-L-threonyl-[receptor-protein] + ADP + H(+). It catalyses the reaction L-seryl-[receptor-protein] + ATP = O-phospho-L-seryl-[receptor-protein] + ADP + H(+). Transmembrane serine/threonine kinase activin type-2 receptor forming an activin receptor complex with activin type-1 serine/threonine kinase receptors (ACVR1, ACVR1B or ACVR1c). Transduces the activin signal from the cell surface to the cytoplasm and is thus regulating many physiological and pathological processes including neuronal differentiation and neuronal survival, hair follicle development and cycling, FSH production by the pituitary gland, wound healing, extracellular matrix production, immunosuppression and carcinogenesis. Activin is also thought to have a paracrine or autocrine role in follicular development in the ovary. Within the receptor complex, the type-2 receptors act as a primary activin receptors (binds activin-A/INHBA, activin-B/INHBB as well as inhibin-A/INHA-INHBA). The type-1 receptors like ACVR1B act as downstream transducers of activin signals. Activin binds to type-2 receptor at the plasma membrane and activates its serine-threonine kinase. The activated receptor type-2 then phosphorylates and activates the type-1 receptor. Once activated, the type-1 receptor binds and phosphorylates the SMAD proteins SMAD2 and SMAD3, on serine residues of the C-terminal tail. Soon after their association with the activin receptor and subsequent phosphorylation, SMAD2 and SMAD3 are released into the cytoplasm where they interact with the common partner SMAD4. This SMAD complex translocates into the nucleus where it mediates activin-induced transcription. Inhibitory SMAD7, which is recruited to ACVR1B through FKBP1A, can prevent the association of SMAD2 and SMAD3 with the activin receptor complex, thereby blocking the activin signal. Activin signal transduction is also antagonized by the binding to the receptor of inhibin-B via the IGSF1 inhibin coreceptor. In Rattus norvegicus (Rat), this protein is Activin receptor type-2B (Acvr2b).